Here is a 33-residue protein sequence, read N- to C-terminus: Photosystem II reaction center protein Psb30 (33 aa).

The helical transmembrane segment at 5-25 (VIAQLTVLSLIVLSGPLVIIL) threads the bilayer.

The protein belongs to the Psb30/Ycf12 family. As to quaternary structure, PSII is composed of 1 copy each of membrane proteins PsbA, PsbB, PsbC, PsbD, PsbE, PsbF, PsbH, PsbI, PsbJ, PsbK, PsbL, PsbM, PsbT, PsbX, PsbY, PsbZ, Psb30/Ycf12, peripheral proteins of the oxygen-evolving complex and a large number of cofactors. It forms dimeric complexes.

It localises to the plastid. Its subcellular location is the chloroplast thylakoid membrane. In terms of biological role, a core subunit of photosystem II (PSII), probably helps stabilize the reaction center. In Chlorokybus atmophyticus (Soil alga), this protein is Photosystem II reaction center protein Psb30.